The following is a 1605-amino-acid chain: Kinesin-like protein klp-12 (1605 aa).

The region spanning 5–358 (CVQVALRIRP…MKYANRAKEI (354 aa)) is the Kinesin motor domain. An ATP-binding site is contributed by 84–91 (GQTGSGKT). Residues T91 and S217 each coordinate Mg(2+). 3 disordered regions span residues 548–596 (GENV…EESE), 1085–1152 (VSDA…SNNN), and 1198–1232 (SRSN…SSSK). Polar residues predominate over residues 550 to 559 (NVSSEYSSMA). The span at 560–596 (QDEDGTSNEAEELLDEEDLDEDEDETAEEKQEQEESE) shows a compositional bias: acidic residues. The stretch at 575–730 (EEDLDEDEDE…KKAKVELIKK (156 aa)) forms a coiled coil. Positions 1116-1152 (VSTSPASTSFANSTSQSPSFSRNTRFRSTVGGVSNNN) are enriched in polar residues. A compositionally biased stretch (low complexity) spans 1200–1232 (SNLMSSSSSTTTTTLSSSNLLNPRGTTSSSSSK). WD repeat units follow at residues 1282 to 1319 (GHAR…EIRT), 1389 to 1427 (FLET…PLGR), 1525 to 1566 (AHQQ…RMKL), and 1573 to 1605 (AHQE…SNAV).

Belongs to the TRAFAC class myosin-kinesin ATPase superfamily. Kinesin family. Component of a complex at least composed of alpha tubulin and beta tubulin. Within the complex, interacts with the alpha tubulin and beta tubulin dimer.

It is found in the cytoplasm. It localises to the cytoskeleton. Microtubule-binding motor protein which has ATPase activity. In complex with alpha and beta tubulins, preferentially binds to the growing microtubule plus-end to stabilize it and detaches following ATP hydrolysis. Negatively regulates axonal length through inhibiting microtubule polymerization at its plus-end. This chain is Kinesin-like protein klp-12, found in Caenorhabditis elegans.